A 660-amino-acid chain; its full sequence is Long chain acyl-CoA synthetase 1 (660 aa).

An ATP-binding site is contributed by 225 to 236 (IMYTSGTSGDPK). Residues 492–516 (DGWFHTGDIGEILPNGVLKIIDRKK) form a fatty acid-binding region.

Belongs to the ATP-dependent AMP-binding enzyme family. Requires Mg(2+) as cofactor. Epidermal-specific expression along the entire stem. In cauline leaves, was expressed over the entire leaf surface, most strongly in trichomes and guard cells, but not in mesophyll cells. In flowers, the expression was detected in the stigma and filaments of the stamens, and in the carpel was expressed specifically in ovaries. In roots, was expressed in primary and lateral roots, but not in the root tips.

It localises to the endoplasmic reticulum. It carries out the reaction a long-chain fatty acid + ATP + CoA = a long-chain fatty acyl-CoA + AMP + diphosphate. The protein operates within lipid metabolism; fatty acid metabolism. Activation of long-chain fatty acids for both synthesis of cellular lipids, and degradation via beta-oxidation. Acts in both the wax and cutin pathways. Preferentially uses palmitate, palmitoleate, linoleate and eicosenoate. Seems to have a specific activity against very long-chain fatty acid (VLCFA) class with acids longer than 24 carbons (C(24)). This is Long chain acyl-CoA synthetase 1 (LACS1) from Arabidopsis thaliana (Mouse-ear cress).